We begin with the raw amino-acid sequence, 273 residues long: MARHKTSDIMLPAAWRIPWDRQLDQHMARVIKAMAQINFASNMHHNLFMFTTREGLLHRNRMLSSSTTQELQSTQPIAVRQQPRAARACGFGDRDRRVIDPPPIVQLRIDGPGLSEEERRAYLRYPNYVMNCSIWDESGTRDASYMPDEYNHQRRLMGSLVGTPFVGDDDQNQEGCFFCFSDLSCRTPGAFRLKFTLIMIDPARASILRHFPTLTEIKTDIFQVYSAKEFPGMVASSSLAKKLKEQGCIISIKKGNERARPRGADGRSDDEDD.

The span at 66–75 (STTQELQSTQ) shows a compositional bias: low complexity. The tract at residues 66 to 86 (STTQELQSTQPIAVRQQPRAA) is disordered. Residues 70–253 (ELQSTQPIAV…KEQGCIISIK (184 aa)) enclose the Velvet domain. The Nuclear localization signal motif lies at 211–218 (FPTLTEIK). Over residues 254 to 267 (KGNERARPRGADGR) the composition is skewed to basic and acidic residues. The segment at 254-273 (KGNERARPRGADGRSDDEDD) is disordered.

The protein belongs to the velvet family. VosA subfamily. As to quaternary structure, forms a heterodimeric complex with velB; the formation of the velB-vosA complex is light-dependent.

It is found in the nucleus. Its function is as follows. Component of the velB-vosA heterodimeric complex that plays a dual role in activating genes associated with spore maturation and repressing certain development-associated genes. The complex binds DNA through the DNA-binding domain of vosA that recognizes an 11-nucleotide consensus sequence 5'-CTGGCCGCGGC-3' consisting of two motifs in the promoters of key developmental regulatory genes. Positively regulates the expression of wetA and represses abaA and brlA. Acts as a crucial regulator of both conidiation capacity and conidial quality. Responsible for the synthesis and accumulation of intracellular trehalose. The sequence is that of Spore development regulator vosA from Beauveria bassiana (strain ARSEF 2860) (White muscardine disease fungus).